The following is a 70-amino-acid chain: Toxin Boma6d (70 aa).

In terms of domain architecture, LCN-type CS-alpha/beta spans R2–H68. 4 cysteine pairs are disulfide-bonded: C12/C67, C16/C40, C22/C50, and C26/C52.

This sequence belongs to the long (4 C-C) scorpion toxin superfamily. Sodium channel inhibitor family. Alpha subfamily. As to expression, expressed by the venom gland.

Its subcellular location is the secreted. Alpha toxins bind voltage-independently at site-3 of sodium channels (Nav) and inhibit the inactivation of the activated channels, thereby blocking neuronal transmission. In Buthus occitanus mardochei (Moroccan scorpion), this protein is Toxin Boma6d.